A 354-amino-acid chain; its full sequence is Probable L-ascorbate-6-phosphate lactonase UlaG (354 aa).

It belongs to the UlaG family. It depends on a divalent metal cation as a cofactor.

The protein resides in the cytoplasm. It carries out the reaction L-ascorbate 6-phosphate + H2O = 3-dehydro-L-gulonate 6-phosphate. The protein operates within cofactor degradation; L-ascorbate degradation; D-xylulose 5-phosphate from L-ascorbate: step 1/4. Functionally, probably catalyzes the hydrolysis of L-ascorbate-6-P into 3-keto-L-gulonate-6-P. Is essential for L-ascorbate utilization under anaerobic conditions. This is Probable L-ascorbate-6-phosphate lactonase UlaG from Shigella flexneri.